We begin with the raw amino-acid sequence, 545 residues long: CTP synthase (545 aa).

Residues 1-265 are amidoligase domain; it reads MTKYIFITGG…DEIVVKKLSL (265 aa). Ser-13 lines the CTP pocket. Ser-13 contacts UTP. Residues 14–19 and Asp-71 contribute to the ATP site; that span reads SLGKGI. 2 residues coordinate Mg(2+): Asp-71 and Glu-139. Residues 146-148, 186-191, and Lys-222 each bind CTP; these read DIE and KTKPTQ. Residues 186–191 and Lys-222 contribute to the UTP site; that span reads KTKPTQ. The Glutamine amidotransferase type-1 domain maps to 290–541; the sequence is KIAMVGKYTE…VLAARIHHQE (252 aa). Gly-351 contributes to the L-glutamine binding site. The active-site Nucleophile; for glutamine hydrolysis is Cys-378. L-glutamine-binding positions include 379 to 382, Glu-402, and Arg-469; that span reads LGMQ. Residues His-514 and Glu-516 contribute to the active site.

This sequence belongs to the CTP synthase family. In terms of assembly, homotetramer.

The catalysed reaction is UTP + L-glutamine + ATP + H2O = CTP + L-glutamate + ADP + phosphate + 2 H(+). It catalyses the reaction L-glutamine + H2O = L-glutamate + NH4(+). The enzyme catalyses UTP + NH4(+) + ATP = CTP + ADP + phosphate + 2 H(+). It participates in pyrimidine metabolism; CTP biosynthesis via de novo pathway; CTP from UDP: step 2/2. Its activity is regulated as follows. Allosterically activated by GTP, when glutamine is the substrate; GTP has no effect on the reaction when ammonia is the substrate. The allosteric effector GTP functions by stabilizing the protein conformation that binds the tetrahedral intermediate(s) formed during glutamine hydrolysis. Inhibited by the product CTP, via allosteric rather than competitive inhibition. Its function is as follows. Catalyzes the ATP-dependent amination of UTP to CTP with either L-glutamine or ammonia as the source of nitrogen. Regulates intracellular CTP levels through interactions with the four ribonucleotide triphosphates. The chain is CTP synthase from Legionella pneumophila (strain Corby).